A 149-amino-acid chain; its full sequence is Nucleoside diphosphate kinase (149 aa).

The ATP site is built by Lys9, Phe57, Arg85, Thr91, Arg102, and Asn112. The active-site Pros-phosphohistidine intermediate is His115.

It belongs to the NDK family. As to quaternary structure, homotetramer. Mg(2+) is required as a cofactor.

It is found in the cytoplasm. The catalysed reaction is a 2'-deoxyribonucleoside 5'-diphosphate + ATP = a 2'-deoxyribonucleoside 5'-triphosphate + ADP. The enzyme catalyses a ribonucleoside 5'-diphosphate + ATP = a ribonucleoside 5'-triphosphate + ADP. Its function is as follows. Major role in the synthesis of nucleoside triphosphates other than ATP. The ATP gamma phosphate is transferred to the NDP beta phosphate via a ping-pong mechanism, using a phosphorylated active-site intermediate. In Staphylococcus saprophyticus subsp. saprophyticus (strain ATCC 15305 / DSM 20229 / NCIMB 8711 / NCTC 7292 / S-41), this protein is Nucleoside diphosphate kinase.